Consider the following 92-residue polypeptide: 10 kDa late embryogenesis abundant protein (92 aa).

The segment covering 1 to 10 (MASQQGQQTR) has biased composition (polar residues). A disordered region spans residues 1–92 (MASQQGQQTR…GEREEEEEED (92 aa)). Basic and acidic residues-rich tracts occupy residues 11–26 (KIPEQEKKDLDQRAAK) and 38–71 (KSLEAQERLAEGRSKGGQTRKDQLGTEGYKEMGK).

It belongs to the small hydrophilic plant seed protein family. As to expression, maximally expressed in dry seeds. Also present in mid-maturation embryos.

LEA proteins are late embryonic proteins abundant in higher plant seed embryos. They may play an essential role in seed survival and in controlling water exchanges during seed desiccation and imbibition. The chain is 10 kDa late embryogenesis abundant protein from Helianthus annuus (Common sunflower).